Here is a 353-residue protein sequence, read N- to C-terminus: S-adenosylmethionine:tRNA ribosyltransferase-isomerase (353 aa).

It belongs to the QueA family. In terms of assembly, monomer.

The protein resides in the cytoplasm. It catalyses the reaction 7-aminomethyl-7-carbaguanosine(34) in tRNA + S-adenosyl-L-methionine = epoxyqueuosine(34) in tRNA + adenine + L-methionine + 2 H(+). It functions in the pathway tRNA modification; tRNA-queuosine biosynthesis. Functionally, transfers and isomerizes the ribose moiety from AdoMet to the 7-aminomethyl group of 7-deazaguanine (preQ1-tRNA) to give epoxyqueuosine (oQ-tRNA). The protein is S-adenosylmethionine:tRNA ribosyltransferase-isomerase of Baumannia cicadellinicola subsp. Homalodisca coagulata.